Here is a 252-residue protein sequence, read N- to C-terminus: MNKVVVKNVTFGEGAPKICVPMVGKTVAALKEEAEMLQTIDLDVVEWRVDFFEDVKDLAKVEAALDEIRTILPETPILFTFRSAKEGGELAVSDEFYFELNETLAGTGKIDLVDVELFNEEADVLRLIETAHKNNVKVVMSNHDFDKTPAKEEIVSRLTRMEALGADLPKIAVMPKSAGDVLTLLDATNTVSEKANQPIITMSMAGTGVISRLAGEVFGSAMTFGAAKKASAPGQIDVNELRHVLDLLHKQF.

Residues 46-48 and Arg-82 each bind 3-dehydroquinate; that span reads EWR. His-143 (proton donor/acceptor) is an active-site residue. Lys-170 acts as the Schiff-base intermediate with substrate in catalysis. 3 residues coordinate 3-dehydroquinate: Arg-212, Ser-231, and Gln-235.

Belongs to the type-I 3-dehydroquinase family. As to quaternary structure, homodimer.

It catalyses the reaction 3-dehydroquinate = 3-dehydroshikimate + H2O. The protein operates within metabolic intermediate biosynthesis; chorismate biosynthesis; chorismate from D-erythrose 4-phosphate and phosphoenolpyruvate: step 3/7. Involved in the third step of the chorismate pathway, which leads to the biosynthesis of aromatic amino acids. Catalyzes the cis-dehydration of 3-dehydroquinate (DHQ) and introduces the first double bond of the aromatic ring to yield 3-dehydroshikimate. The protein is 3-dehydroquinate dehydratase of Listeria monocytogenes serotype 4b (strain CLIP80459).